Reading from the N-terminus, the 366-residue chain is 3-dehydroquinate synthase (366 aa).

NAD(+) contacts are provided by residues 69 to 74 (DGEAHK), 103 to 107 (GVIGD), 127 to 128 (TT), K140, K149, and 167 to 170 (TLNT). Positions 182, 245, and 262 each coordinate Zn(2+).

Belongs to the sugar phosphate cyclases superfamily. Dehydroquinate synthase family. It depends on Co(2+) as a cofactor. Requires Zn(2+) as cofactor. NAD(+) is required as a cofactor.

It localises to the cytoplasm. It carries out the reaction 7-phospho-2-dehydro-3-deoxy-D-arabino-heptonate = 3-dehydroquinate + phosphate. Its pathway is metabolic intermediate biosynthesis; chorismate biosynthesis; chorismate from D-erythrose 4-phosphate and phosphoenolpyruvate: step 2/7. Catalyzes the conversion of 3-deoxy-D-arabino-heptulosonate 7-phosphate (DAHP) to dehydroquinate (DHQ). In Pseudomonas fluorescens (strain SBW25), this protein is 3-dehydroquinate synthase.